The chain runs to 152 residues: Protein SprT-like (152 aa).

The SprT-like domain maps to 13 to 148; the sequence is NYVKKVSIED…FACGYCHGRL (136 aa). H72 is a binding site for Zn(2+). Residue E73 is part of the active site. H76 contributes to the Zn(2+) binding site.

This sequence belongs to the SprT family. Zn(2+) is required as a cofactor.

It localises to the cytoplasm. The protein is Protein SprT-like of Streptococcus agalactiae serotype III (strain NEM316).